We begin with the raw amino-acid sequence, 149 residues long: Large ribosomal subunit protein uL13 (149 aa).

It belongs to the universal ribosomal protein uL13 family. Part of the 50S ribosomal subunit.

This protein is one of the early assembly proteins of the 50S ribosomal subunit, although it is not seen to bind rRNA by itself. It is important during the early stages of 50S assembly. This is Large ribosomal subunit protein uL13 from Chlorobium limicola (strain DSM 245 / NBRC 103803 / 6330).